The following is a 475-amino-acid chain: MVEDLAASYIVLKLENEIRQAQVQWLMEENAALQAQIPELQKSQAAKEYDLLRKSSEAKEPQKLPEHMNPPAAWEAQKTPEFKEPQKPPEPQDLLPWEPPAAWELQEAPAAPESLAPPATRESQKPPMAHEIPTVLEGQGPANTQDATIAQEPKNSEPQDPPNIEKPQEAPEYQETAAQLEFLELPPPQEPLEPSNAQEFLELSAAQESLEGLIVVETSAASEFPQAPIGLEATDFPLQYTLTFSGDSQKLPEFLVQLYSYMRVRGHLYPTEAALVSFVGNCFSGRAGWWFQLLLDIQSPLLEQCESFIPVLQDTFDNPENMKDANQCIHQLCQGEGHVATHFHLIAQELNWDESTLWIQFQEGLASSIQDELSHTSPATNLSDLITQCISLEEKPDPNPLGKSSSAEGDGPESPPAENQPMQAAINCPHISEAEWVRWHKGRLCLYCGYPGHFARDCPVKPHQALQAGNIQACQ.

2 stretches are compositionally biased toward basic and acidic residues: residues leucine 51–glutamate 66 and lysine 78–lysine 87. Disordered regions lie at residues leucine 51–alanine 101, glutamate 152–tyrosine 173, and aspartate 397–proline 421. Residues arginine 443–proline 462 form a CCHC-type zinc finger.

Its subcellular location is the nucleus. Functionally, may function as a transcriptional regulator. Plays a role in postnatal myogenesis, may be involved in the regulation of satellite cells self-renewal. This chain is Retrotransposon Gag-like protein 3, found in Homo sapiens (Human).